Consider the following 367-residue polypeptide: Peptide chain release factor 2 (367 aa).

At Q254 the chain carries N5-methylglutamine.

It belongs to the prokaryotic/mitochondrial release factor family. In terms of processing, methylated by PrmC. Methylation increases the termination efficiency of RF2.

The protein resides in the cytoplasm. In terms of biological role, peptide chain release factor 2 directs the termination of translation in response to the peptide chain termination codons UGA and UAA. The protein is Peptide chain release factor 2 of Bordetella bronchiseptica (strain ATCC BAA-588 / NCTC 13252 / RB50) (Alcaligenes bronchisepticus).